Reading from the N-terminus, the 84-residue chain is MVARHRAQAAADLASLAAAARLPSGLAAACARATLVARAMRVEHAQCRVVDLDVVVTVEVAVAFAGVATATARAGPAKVPTTPG.

A signal peptide spans 1 to 39 (MVARHRAQAAADLASLAAAARLPSGLAAACARATLVARA).

As to quaternary structure, interacts with human polypyrimidine tract binding protein-associated splicing factor (PSF).

Its subcellular location is the secreted. It is found in the host cytoplasm. Functionally, effector protein that participates in the suppression of macrophage apoptosis by blocking the extrinsic pathway. Recognizes the host polypyrimidine tract binding protein-associated splicing factor (PSF), which probably leads to its cleavage, diminishing the level of caspase-8 in macrophages. This chain is Apoptosis inhibitor Rv3654c, found in Mycobacterium tuberculosis (strain ATCC 25618 / H37Rv).